The primary structure comprises 499 residues: Glucose-6-phosphate isomerase (499 aa).

The Proton donor role is filled by Glu-352. Catalysis depends on residues His-383 and Lys-487.

It belongs to the GPI family.

It is found in the cytoplasm. The enzyme catalyses alpha-D-glucose 6-phosphate = beta-D-fructose 6-phosphate. It participates in carbohydrate biosynthesis; gluconeogenesis. It functions in the pathway carbohydrate degradation; glycolysis; D-glyceraldehyde 3-phosphate and glycerone phosphate from D-glucose: step 2/4. In terms of biological role, catalyzes the reversible isomerization of glucose-6-phosphate to fructose-6-phosphate. This Legionella pneumophila (strain Paris) protein is Glucose-6-phosphate isomerase.